Reading from the N-terminus, the 786-residue chain is Signal transducer and activator of transcription 5B (786 aa).

Tyrosine 90 is modified (phosphotyrosine). The residue at position 128 (serine 128) is a Phosphoserine. The SH2 domain occupies 589 to 686 (WNDGAILGFV…EVYSKYYTPV (98 aa)). Tyrosine 682 and tyrosine 699 each carry phosphotyrosine.

It belongs to the transcription factor STAT family. Upon activation, forms a homodimer or a heterodimer with a related family member. Binds NR3C1. Interacts with NCOA1. Interacts with SOCS7. Interacts (via SH2 domain) with INSR. Interacts with CPEB3; this inhibits STAT5B-mediated transcriptional activation. Tyrosine phosphorylated in response to signaling via activated KIT, resulting in translocation to the nucleus. Tyrosine phosphorylated in response to signaling via activated FLT3; wild-type FLT3 results in much weaker phosphorylation than constitutively activated mutant FLT3. Alternatively, can be phosphorylated by JAK2. Phosphorylation at Tyr-699 by PTK6 or HCK leads to an increase of its transcriptional activity. As to expression, in the virgin, found in most tissues. Particularly abundant in muscle tissue of virgin and lactating females, and of males.

Its subcellular location is the cytoplasm. It localises to the nucleus. Its function is as follows. Carries out a dual function: signal transduction and activation of transcription. Mediates cellular responses to the cytokine KITLG/SCF and other growth factors. Binds to the GAS element and activates PRL-induced transcription. Positively regulates hematopoietic/erythroid differentiation. In Mus musculus (Mouse), this protein is Signal transducer and activator of transcription 5B (Stat5b).